Here is a 185-residue protein sequence, read N- to C-terminus: Ribosome-recycling factor (185 aa).

Belongs to the RRF family.

Its subcellular location is the cytoplasm. Functionally, responsible for the release of ribosomes from messenger RNA at the termination of protein biosynthesis. May increase the efficiency of translation by recycling ribosomes from one round of translation to another. The chain is Ribosome-recycling factor from Nitrosospira multiformis (strain ATCC 25196 / NCIMB 11849 / C 71).